Here is a 34-residue protein sequence, read N- to C-terminus: Phalloidin proprotein (34 aa).

A propeptide spanning residues 1–10 (MSDINTTCLP) is cleaved from the precursor. Residues 11–17 (AWLATCP) constitute a cross-link (cyclopeptide (Ala-Pro)). The 2'-cysteinyl-6'-hydroxytryptophan sulfoxide (Trp-Cys) cross-link spans 12 to 16 (WLATC). Residues 18 to 34 (CTGDDVNPTLTCGESLC) constitute a propeptide that is removed on maturation.

Belongs to the MSDIN fungal toxin family. Post-translationally, processed by the macrocyclase-peptidase enzyme POPB to yield a toxic cyclic heptapeptide. POPB first removes 10 residues from the N-terminus. Conformational trapping of the remaining peptide forces the enzyme to release this intermediate rather than proceed to macrocyclization. The enzyme rebinds the remaining peptide in a different conformation and catalyzes macrocyclization of the N-terminal 7 residues.

Its function is as follows. Toxin that belongs to the bicyclic heptapeptides called phallotoxins. Although structurally related to amatoxins, phallotoxins have a different mode of action, which is the stabilization of F-actin. Phallotoxins are poisonous when administered parenterally, but not orally because of poor absorption. The protein is Phalloidin proprotein of Amanita phalloides (Death cap).